A 628-amino-acid polypeptide reads, in one-letter code: U-box domain-containing protein 10 (628 aa).

Residues 242-316 (TIPEDFLCPI…SQWCTKHNIE (75 aa)) form the U-box domain. 5 ARM repeats span residues 373–413 (TDNR…NLSI), 415–454 (EHNK…SLSL), 456–495 (DENK…NLCI), 497–537 (QGNK…VLAS), and 539–578 (QVAK…CLCK).

The enzyme catalyses S-ubiquitinyl-[E2 ubiquitin-conjugating enzyme]-L-cysteine + [acceptor protein]-L-lysine = [E2 ubiquitin-conjugating enzyme]-L-cysteine + N(6)-ubiquitinyl-[acceptor protein]-L-lysine.. Its pathway is protein modification; protein ubiquitination. Functions as an E3 ubiquitin ligase. The chain is U-box domain-containing protein 10 (PUB10) from Arabidopsis thaliana (Mouse-ear cress).